We begin with the raw amino-acid sequence, 739 residues long: Protein NPGR2 (739 aa).

The interval 32–71 (EQMRHREEEDKKSEVGVGRDYNGSSALSTAESENAKKLDN) is disordered. Positions 33-45 (QMRHREEEDKKSE) are enriched in basic and acidic residues. Positions 53–63 (NGSSALSTAES) are enriched in polar residues. TPR repeat units lie at residues 90-127 (EEARALLGRIEYQKGNIEAALRVFEGIDINGITVKMKT), 162-195 (FEAIFLKAKSLQRLGRFQEAAESCRVILDIVETS), 215-248 (TKAVELLPELWKLADSPRDAILSYRRALLNHWKL), 465-498 (PRVVHRLALENAEQRKLDSALAYAKEALKLGAES), 500-533 (LEVWLLLARVLSAQKRFSDAETIVDAALNETGKW), 536-569 (GKLLRLKAKLRLAKGEVKDAIKTYTQLLALLQVQ), 592-625 (LGTWHDLAHIYINLSQWRDAESCLSRSRLIAPYS), 626-659 (SVRYHIEGVLYNRRGQLEEAMEAFTTALDIDPMH), and 697-733 (HSAWYNLGKMFKAEGSVSSMQEAVECFQAAVTLEETM).

Interacts with calmodulin in a calcium-dependent manner. As to expression, expressed in pollen, flowers and fruits.

This Arabidopsis thaliana (Mouse-ear cress) protein is Protein NPGR2.